The following is a 41-amino-acid chain: Large ribosomal subunit protein bL36 (41 aa).

The protein belongs to the bacterial ribosomal protein bL36 family.

The polypeptide is Large ribosomal subunit protein bL36 (Nitrobacter winogradskyi (strain ATCC 25391 / DSM 10237 / CIP 104748 / NCIMB 11846 / Nb-255)).